The chain runs to 252 residues: Enolase-phosphatase E1 (252 aa).

The Mg(2+) site is built by aspartate 14 and glutamate 16. Residues serine 142 to serine 143 and lysine 176 each bind substrate. Aspartate 201 contributes to the Mg(2+) binding site.

It belongs to the HAD-like hydrolase superfamily. MasA/MtnC family. As to quaternary structure, monomer. The cofactor is Mg(2+).

The protein resides in the cytoplasm. The protein localises to the nucleus. It catalyses the reaction 5-methylsulfanyl-2,3-dioxopentyl phosphate + H2O = 1,2-dihydroxy-5-(methylsulfanyl)pent-1-en-3-one + phosphate. The protein operates within amino-acid biosynthesis; L-methionine biosynthesis via salvage pathway; L-methionine from S-methyl-5-thio-alpha-D-ribose 1-phosphate: step 3/6. Its pathway is amino-acid biosynthesis; L-methionine biosynthesis via salvage pathway; L-methionine from S-methyl-5-thio-alpha-D-ribose 1-phosphate: step 4/6. In terms of biological role, bifunctional enzyme that catalyzes the enolization of 2,3-diketo-5-methylthiopentyl-1-phosphate (DK-MTP-1-P) into the intermediate 2-hydroxy-3-keto-5-methylthiopentenyl-1-phosphate (HK-MTPenyl-1-P), which is then dephosphorylated to form the acireductone 1,2-dihydroxy-3-keto-5-methylthiopentene (DHK-MTPene). This is Enolase-phosphatase E1 from Drosophila ananassae (Fruit fly).